The following is a 510-amino-acid chain: Leucine-rich repeat-containing protein 53 (510 aa).

LRR repeat units follow at residues 34–55, 58–79, 82–102, 108–129, 132–153, 158–179, and 182–203; these read TTRVLIITDGYLSSIESTNLSL, NLALLSLSRNGIEDVQEDALDG, MLRTLLLEHNQISSSSLTDHT, SLQVLVLSNNALRTLRGSWFRN, GLTRLQLDGNQITNLTDSSFGG, SLRHLDLSNNFISYIGKDAFRP, and QLQEVDLSRNRLAHMPDVFTPL. The LRRCT domain maps to 214–271; sequence NQWSCTCDLHPLARFLRNYIKSSAHTLRNAKDLNCQPSTAAVAAAQSVLRLSETNCDP. Residues 294-314 form a helical membrane-spanning segment; sequence LLTVLGFAGAVGLTCLGLVVF.

It localises to the membrane. This Macaca fascicularis (Crab-eating macaque) protein is Leucine-rich repeat-containing protein 53 (LRRC53).